The following is a 445-amino-acid chain: Ribosomal protein uS12 methylthiotransferase RimO (445 aa).

Residues 4-119 (IKVALVSLGC…LLESIKVFLK (116 aa)) enclose the MTTase N-terminal domain. [4Fe-4S] cluster-binding residues include Cys13, Cys48, Cys82, Cys156, Cys160, and Cys163. One can recognise a Radical SAM core domain in the interval 142–372 (TTPTYTAYVR…MILQQSISKD (231 aa)). The TRAM domain occupies 375–441 (KEKIGKIYEV…EYDLIGVVYN (67 aa)).

It belongs to the methylthiotransferase family. RimO subfamily. The cofactor is [4Fe-4S] cluster.

The protein localises to the cytoplasm. The catalysed reaction is L-aspartate(89)-[ribosomal protein uS12]-hydrogen + (sulfur carrier)-SH + AH2 + 2 S-adenosyl-L-methionine = 3-methylsulfanyl-L-aspartate(89)-[ribosomal protein uS12]-hydrogen + (sulfur carrier)-H + 5'-deoxyadenosine + L-methionine + A + S-adenosyl-L-homocysteine + 2 H(+). Its function is as follows. Catalyzes the methylthiolation of an aspartic acid residue of ribosomal protein uS12. In Clostridium botulinum (strain Okra / Type B1), this protein is Ribosomal protein uS12 methylthiotransferase RimO.